A 147-amino-acid polypeptide reads, in one-letter code: Methylated-DNA--protein-cysteine methyltransferase (147 aa).

The active-site Nucleophile; methyl group acceptor is the C112.

This sequence belongs to the MGMT family.

The protein localises to the cytoplasm. The catalysed reaction is a 6-O-methyl-2'-deoxyguanosine in DNA + L-cysteinyl-[protein] = S-methyl-L-cysteinyl-[protein] + a 2'-deoxyguanosine in DNA. It carries out the reaction a 4-O-methyl-thymidine in DNA + L-cysteinyl-[protein] = a thymidine in DNA + S-methyl-L-cysteinyl-[protein]. Involved in the cellular defense against the biological effects of O6-methylguanine (O6-MeG) and O4-methylthymine (O4-MeT) in DNA. Repairs the methylated nucleobase in DNA by stoichiometrically transferring the methyl group to a cysteine residue in the enzyme. This is a suicide reaction: the enzyme is irreversibly inactivated. This is Methylated-DNA--protein-cysteine methyltransferase from Archaeoglobus fulgidus (strain ATCC 49558 / DSM 4304 / JCM 9628 / NBRC 100126 / VC-16).